Consider the following 85-residue polypeptide: Elongation factor 1-beta (85 aa).

It belongs to the EF-1-beta/EF-1-delta family.

Its function is as follows. Promotes the exchange of GDP for GTP in EF-1-alpha/GDP, thus allowing the regeneration of EF-1-alpha/GTP that could then be used to form the ternary complex EF-1-alpha/GTP/AAtRNA. The sequence is that of Elongation factor 1-beta from Methanoregula boonei (strain DSM 21154 / JCM 14090 / 6A8).